The sequence spans 197 residues: Holliday junction branch migration complex subunit RuvA (197 aa).

The interval 1–64 (MIALLRGLVV…EDVLALYGFL (64 aa)) is domain I. The domain II stretch occupies residues 65-143 (TQDEKALFEK…AATGEEPGAP (79 aa)). Residues 144-153 (AAEALSPIDQ) form a flexible linker region. The tract at residues 153-197 (QDVLSALLNLGCARPQAEAAVRKAKAAGASLDFEPLFRRALELVR) is domain III.

Belongs to the RuvA family. Homotetramer. Forms an RuvA(8)-RuvB(12)-Holliday junction (HJ) complex. HJ DNA is sandwiched between 2 RuvA tetramers; dsDNA enters through RuvA and exits via RuvB. An RuvB hexamer assembles on each DNA strand where it exits the tetramer. Each RuvB hexamer is contacted by two RuvA subunits (via domain III) on 2 adjacent RuvB subunits; this complex drives branch migration. In the full resolvosome a probable DNA-RuvA(4)-RuvB(12)-RuvC(2) complex forms which resolves the HJ.

It localises to the cytoplasm. Its function is as follows. The RuvA-RuvB-RuvC complex processes Holliday junction (HJ) DNA during genetic recombination and DNA repair, while the RuvA-RuvB complex plays an important role in the rescue of blocked DNA replication forks via replication fork reversal (RFR). RuvA specifically binds to HJ cruciform DNA, conferring on it an open structure. The RuvB hexamer acts as an ATP-dependent pump, pulling dsDNA into and through the RuvAB complex. HJ branch migration allows RuvC to scan DNA until it finds its consensus sequence, where it cleaves and resolves the cruciform DNA. This Solibacter usitatus (strain Ellin6076) protein is Holliday junction branch migration complex subunit RuvA.